Here is a 222-residue protein sequence, read N- to C-terminus: Superoxide dismutase [Mn], mitochondrial (222 aa).

The N-terminal 24 residues, 1 to 24 (MLCRAACSTSRKLVPALGSLGSRQ), are a transit peptide targeting the mitochondrion. Mn(2+) is bound at residue His-50. Tyr-58 carries the 3'-nitrotyrosine modification. Residues Lys-68 and Lys-75 each carry the N6-acetyllysine; alternate modification. 2 positions are modified to N6-succinyllysine; alternate: Lys-68 and Lys-75. His-98 serves as a coordination point for Mn(2+). Lys-114 carries the N6-acetyllysine modification. N6-acetyllysine; alternate is present on residues Lys-122 and Lys-130. Lys-122 and Lys-130 each carry N6-succinyllysine; alternate. 2 residues coordinate Mn(2+): Asp-183 and His-187. Lys-202 carries the post-translational modification N6-acetyllysine.

The protein belongs to the iron/manganese superoxide dismutase family. Homotetramer. It depends on Mn(2+) as a cofactor. Post-translationally, nitrated under oxidative stress. Nitration coupled with oxidation inhibits the catalytic activity. Acetylation at Lys-122 decreases enzymatic activity. Deacetylated by SIRT3 upon exposure to ionizing radiations or after long fasting. In terms of processing, polyubiquitinated; leading to proteasomal degradation. Deubiquitinated by USP36 which increases protein stability.

The protein localises to the mitochondrion matrix. The enzyme catalyses 2 superoxide + 2 H(+) = H2O2 + O2. Destroys superoxide anion radicals which are normally produced within the cells and which are toxic to biological systems. In Equus caballus (Horse), this protein is Superoxide dismutase [Mn], mitochondrial (SOD2).